The sequence spans 301 residues: Rhodopsin (301 aa).

Residues 1–18 (LHMIHLHWYQYPPMNPMM) lie on the Extracellular side of the membrane. A helical membrane pass occupies residues 19-43 (YPLLLIFMLFTGILCLAGNFVTIWV). Over 44 to 55 (FMNTKSLRTPAN) the chain is Cytoplasmic. The chain crosses the membrane as a helical span at residues 56-78 (LLVVNLAMSDFLMMFTMFPPMMV). Residues 79-92 (TCYYHTWTLGPTFC) are Extracellular-facing. C92 and C169 are oxidised to a cystine. The helical transmembrane segment at 93 to 115 (QVYAFLGNLCGCASIWTMVFITF) threads the bilayer. Positions 116 to 118 (DRY) match the 'Ionic lock' involved in activated form stabilization motif. The Cytoplasmic portion of the chain corresponds to 116–134 (DRYNVIVKGVAGEPLSTKK). Residues 135–155 (ASLWILTIWVLSTTWCIAPFF) form a helical membrane-spanning segment. Residues 156–182 (GWNHYVPEGNLTGCGTDYLSEDILSRS) lie on the Extracellular side of the membrane. An N-linked (GlcNAc...) asparagine glycan is attached at N165. Residues 183–204 (YLYVYSTWVYFLPLAITIYCYV) traverse the membrane as a helical segment. Over 205 to 245 (FIIKAVAAHEKGMRDQAKKMGIKSLRNEEAQKTSAECRLAK) the chain is Cytoplasmic. A helical transmembrane segment spans residues 246–267 (IAMTTVALWFIAWTPCLLINWV). The Extracellular segment spans residues 268 to 278 (GMFARSYLSPV). Residues 279–300 (YTIWGYVFAKANAVYNPIVYAI) form a helical membrane-spanning segment. K288 carries the N6-(retinylidene)lysine modification.

It belongs to the G-protein coupled receptor 1 family. Opsin subfamily. Homodimer. Interacts with GNAQ. Post-translationally, contains one covalently linked retinal chromophore.

The protein resides in the cell projection. The protein localises to the rhabdomere membrane. In terms of biological role, photoreceptor required for image-forming vision at low light intensity. Can use both retinal and 3-dehydroretinal as visual pigment. Light-induced isomerization of 11-cis to all-trans retinal triggers a conformational change that activates signaling via G-proteins. Signaling via GNAQ probably mediates the activation of phospholipase C. This Procambarus seminolae (Crayfish) protein is Rhodopsin (RHO).